Consider the following 616-residue polypeptide: UPF0329 protein ECU02_1540 (616 aa).

2 stretches are compositionally biased toward basic and acidic residues: residues glutamate 350–glycine 359 and glycine 369–aspartate 381. A disordered region spans residues glutamate 350–isoleucine 427. A compositionally biased stretch (acidic residues) spans glycine 382–alanine 396. Residues alanine 408 to isoleucine 427 are compositionally biased toward basic residues.

Belongs to the UPF0329 family.

The protein is UPF0329 protein ECU02_1540 of Encephalitozoon cuniculi (strain GB-M1) (Microsporidian parasite).